The primary structure comprises 297 residues: Glycerol-3-phosphate dehydrogenase [NAD(P)+] (297 aa).

Positions 11, 33, and 79 each coordinate NADPH. Sn-glycerol 3-phosphate-binding residues include K79, G107, and S109. A111 contacts NADPH. 5 residues coordinate sn-glycerol 3-phosphate: K161, D214, S224, R225, and N226. K161 (proton acceptor) is an active-site residue. R225 provides a ligand contact to NADPH. NADPH is bound by residues V249 and E251.

It belongs to the NAD-dependent glycerol-3-phosphate dehydrogenase family.

The protein localises to the cytoplasm. It carries out the reaction sn-glycerol 3-phosphate + NAD(+) = dihydroxyacetone phosphate + NADH + H(+). The catalysed reaction is sn-glycerol 3-phosphate + NADP(+) = dihydroxyacetone phosphate + NADPH + H(+). Its pathway is membrane lipid metabolism; glycerophospholipid metabolism. Functionally, catalyzes the reduction of the glycolytic intermediate dihydroxyacetone phosphate (DHAP) to sn-glycerol 3-phosphate (G3P), the key precursor for phospholipid synthesis. This Campylobacter jejuni subsp. jejuni serotype O:2 (strain ATCC 700819 / NCTC 11168) protein is Glycerol-3-phosphate dehydrogenase [NAD(P)+].